Reading from the N-terminus, the 1390-residue chain is DNA-directed RNA polymerase subunit beta (1390 aa).

This sequence belongs to the RNA polymerase beta chain family. In terms of assembly, the RNAP catalytic core consists of 2 alpha, 1 beta, 1 beta' and 1 omega subunit. When a sigma factor is associated with the core the holoenzyme is formed, which can initiate transcription.

It carries out the reaction RNA(n) + a ribonucleoside 5'-triphosphate = RNA(n+1) + diphosphate. DNA-dependent RNA polymerase catalyzes the transcription of DNA into RNA using the four ribonucleoside triphosphates as substrates. The polypeptide is DNA-directed RNA polymerase subunit beta (Rhodopseudomonas palustris (strain HaA2)).